The primary structure comprises 122 residues: Venom protein 7.1 (122 aa).

An N-terminal signal peptide occupies residues 1-19; sequence MRFSIISASLVLIFANVKA.

Contains 3 disulfide bonds. As to expression, expressed by the venom gland.

The protein resides in the secreted. The sequence is that of Venom protein 7.1 from Lychas mucronatus (Chinese swimming scorpion).